Consider the following 39-residue polypeptide: Photosystem II reaction center protein X (39 aa).

The chain crosses the membrane as a helical span at residues 10–30 (WSLLWGTAIVVIPVTVGLIFI).

This sequence belongs to the PsbX family. Type 1 subfamily. As to quaternary structure, PSII is composed of 1 copy each of membrane proteins PsbA, PsbB, PsbC, PsbD, PsbE, PsbF, PsbH, PsbI, PsbJ, PsbK, PsbL, PsbM, PsbT, PsbX, PsbY, PsbZ, Psb30/Ycf12, peripheral proteins PsbO, CyanoQ (PsbQ), PsbU, PsbV and a large number of cofactors. It forms dimeric complexes.

It localises to the cellular thylakoid membrane. Involved in the binding and/or turnover of quinones at the Q(B) site of photosystem II (PSII). PSII is a light-driven water plastoquinone oxidoreductase, using light energy to abstract electrons from H(2)O, generating a proton gradient subsequently used for ATP formation. The sequence is that of Photosystem II reaction center protein X from Nostoc punctiforme (strain ATCC 29133 / PCC 73102).